A 65-amino-acid polypeptide reads, in one-letter code: Toxin VmKTx1 (65 aa).

A signal peptide spans 1–21; it reads MKTSCLLTILLLSFLVAVAVA. The propeptide occupies 22–28; sequence EGERSAR. Disulfide bonds link C34–C54, C40–C59, C44–C61, and C49–C64. C64 bears the Cysteine amide mark.

It belongs to the short scorpion toxin superfamily. Potassium channel inhibitor family. Alpha-KTx 23 subfamily. Expressed by the venom gland.

Its subcellular location is the secreted. Functionally, voltage-gated potassium channel inhibitor. Selectively and reversibly binds (Kd=0.77 nM) and blocks hKv1.3/KCNA3 potassium channels of human T-lymphocytes. Also shows a very weak effect on hKv1.2/KCNA2 (Kd=7.1 uM). Also reduces the fraction of CD40L expressing T cells that are stimulated by alphaCD3/alphaCD28. The polypeptide is Toxin VmKTx1 (Vaejovis mexicanus smithi (Mexican scorpion)).